Here is a 474-residue protein sequence, read N- to C-terminus: Gamma-aminobutyric acid receptor subunit beta-2 (474 aa).

An N-terminal signal peptide occupies residues 1–25 (MWRVRKRGYFGIWSFPLIIAAVCAQ). Topologically, residues 26 to 244 (SVNDPSNMSL…SFKLKRNIGY (219 aa)) are extracellular. Residues Asn-32 and Asn-104 are each glycosylated (N-linked (GlcNAc...) asparagine). Tyr-121 lines the histamine pocket. The cysteines at positions 160 and 174 are disulfide-linked. A glycan (N-linked (GlcNAc...) asparagine) is linked at Asn-173. Histamine-binding positions include 180 to 181 (SY) and Thr-226. 4-aminobutanoate is bound by residues Tyr-181 and Thr-226. 3 helical membrane passes run 245–266 (FILQTYMPSILITILSWVSFWI), 270–292 (ASAARVALGITTVLTMTTINTHL), and 304–326 (AIDMYLMGCFVFVFMALLEYALV). Residues 327–451 (NYIFFGRGPQ…DLTDVNAIDR (125 aa)) are Cytoplasmic-facing. Position 403 is a phosphotyrosine (Tyr-403). Residues 452-473 (WSRIFFPVVFSFFNIVYWLYYV) traverse the membrane as a helical segment.

This sequence belongs to the ligand-gated ion channel (TC 1.A.9) family. Gamma-aminobutyric acid receptor (TC 1.A.9.5) subfamily. GABRB2 sub-subfamily. In terms of assembly, heteropentamer, formed by a combination of alpha (GABRA1-6), beta (GABRB1-3), gamma (GABRG1-3), delta (GABRD), epsilon (GABRE), rho (GABRR1-3), pi (GABRP) and theta (GABRQ) chains, each subunit exhibiting distinct physiological and pharmacological properties. Interacts with UBQLN1. May interact with KIF21B. Identified in a complex of 720 kDa composed of LHFPL4, NLGN2, GABRA1, GABRB2, GABRG2 and GABRB3. In terms of processing, glycosylated. In terms of tissue distribution, expressed in brain (at protein level), in cerebellar granule cells. Expressed in lungs, in alveolar epithelium.

It localises to the postsynaptic cell membrane. The protein resides in the cell membrane. Its subcellular location is the cytoplasmic vesicle membrane. The enzyme catalyses chloride(in) = chloride(out). Its activity is regulated as follows. Allosterically activated by benzodiazepines and the anesthetic etomidate. Inhibited by the antagonist bicuculline. Potentiated by histamine. In terms of biological role, beta subunit of the heteropentameric ligand-gated chloride channel gated by gamma-aminobutyric acid (GABA), a major inhibitory neurotransmitter in the brain. GABA-gated chloride channels, also named GABA(A) receptors (GABAAR), consist of five subunits arranged around a central pore and contain GABA active binding site(s) located at the alpha and beta subunit interface(s). When activated by GABA, GABAARs selectively allow the flow of chloride anions across the cell membrane down their electrochemical gradient. Chloride influx into the postsynaptic neuron following GABAAR opening decreases the neuron ability to generate a new action potential, thereby reducing nerve transmission. GABAARs containing alpha-1 and beta-2 or -3 subunits exhibit synaptogenic activity; the gamma-2 subunit being necessary but not sufficient to induce rapid synaptic contacts formation. Extrasynaptic beta-2 receptors contribute to the tonic GABAergic inhibition. Beta-containing GABAARs can simultaneously bind GABA and histamine where histamine binds at the interface of two neighboring beta subunits, which may be involved in the regulation of sleep and wakefulness. This is Gamma-aminobutyric acid receptor subunit beta-2 from Rattus norvegicus (Rat).